Reading from the N-terminus, the 338-residue chain is Putative transport protein TM_1349 (338 aa).

7 helical membrane-spanning segments follow: residues 20–40 (ILIS…IVLM), 68–88 (ALLL…PPVF), 147–167 (VSVT…VFYI), 203–223 (VIFI…EAFN), 239–259 (FIPI…SLTL), 263–283 (GVLL…VVFI), and 297–317 (IILS…FVGV).

This sequence belongs to the autoinducer-2 exporter (AI-2E) (TC 2.A.86) family.

Its subcellular location is the cell membrane. In Thermotoga maritima (strain ATCC 43589 / DSM 3109 / JCM 10099 / NBRC 100826 / MSB8), this protein is Putative transport protein TM_1349.